We begin with the raw amino-acid sequence, 227 residues long: Ion-translocating oxidoreductase complex subunit E (227 aa).

The next 6 helical transmembrane spans lie at A18–A38, L39–V59, I69–A89, G93–G113, L125–L145, and H182–L202.

It belongs to the NqrDE/RnfAE family. The complex is composed of six subunits: RnfA, RnfB, RnfC, RnfD, RnfE and RnfG.

It is found in the cell inner membrane. Its function is as follows. Part of a membrane-bound complex that couples electron transfer with translocation of ions across the membrane. This Aliivibrio fischeri (strain ATCC 700601 / ES114) (Vibrio fischeri) protein is Ion-translocating oxidoreductase complex subunit E.